Reading from the N-terminus, the 780-residue chain is E3 UFM1-protein ligase 1 homolog (780 aa).

Polar residues predominate over residues 403 to 413; the sequence is STSSTNPNHST. Disordered stretches follow at residues 403-458 and 734-760; these read STSS…RSHI and SSDKQKPEMSEEPKDSDNSNDNQNIDL. 2 stretches are compositionally biased toward basic and acidic residues: residues 443–458 and 736–750; these read KDRSTPDDLESTRSHI and DKQKPEMSEEPKDSD.

This sequence belongs to the UFL1 family.

Functionally, E3 UFM1-protein ligase that mediates ufmylation of target proteins. This is E3 UFM1-protein ligase 1 homolog from Trichoplax adhaerens (Trichoplax reptans).